Here is a 504-residue protein sequence, read N- to C-terminus: Chorion-specific transcription factor GCMb (504 aa).

Residues 19–174 (LTWDINDPQM…KSETEGRRSA (156 aa)) constitute a DNA-binding region (GCM). Zn(2+) contacts are provided by C81, C87, C91, C118, C121, C130, H157, and H159. Basic and acidic residues-rich tracts occupy residues 155–172 (GVHD…EGRR) and 188–203 (RRSE…DIRG). The segment at 155–203 (GVHDHPRPESKSETEGRRSALKRQMASFYQPQKRRSEEPEARSTQDIRG) is disordered. The tract at residues 379-393 (LQTVITTTVAYQAYQ) is C-terminal conserved inhibitory domain (CCID). The segment at 438–472 (ASPSGRAPLKVPGDCQAPRPTLDFPQEADPSGTDG) is disordered.

It is found in the nucleus. In terms of biological role, transcription factor that binds specific sequences on gene promoters and activate their transcription. Through the regulation of gene transcription, may play a role in parathyroid gland development. In Mus musculus (Mouse), this protein is Chorion-specific transcription factor GCMb.